Reading from the N-terminus, the 562-residue chain is Arginine--tRNA ligase (562 aa).

The short motif at 121–131 is the 'HIGH' region element; it reads PNIAKPISMGH.

It belongs to the class-I aminoacyl-tRNA synthetase family. In terms of assembly, monomer.

The protein localises to the cytoplasm. The enzyme catalyses tRNA(Arg) + L-arginine + ATP = L-arginyl-tRNA(Arg) + AMP + diphosphate. This is Arginine--tRNA ligase from Lactiplantibacillus plantarum (strain ATCC BAA-793 / NCIMB 8826 / WCFS1) (Lactobacillus plantarum).